We begin with the raw amino-acid sequence, 289 residues long: mRNA-capping enzyme small subunit (289 aa).

As to quaternary structure, heterodimer of a large and a small subunit.

The protein resides in the virion. The catalysed reaction is a 5'-end (5'-triphosphoguanosine)-ribonucleoside in mRNA + S-adenosyl-L-methionine = a 5'-end (N(7)-methyl 5'-triphosphoguanosine)-ribonucleoside in mRNA + S-adenosyl-L-homocysteine. In terms of biological role, catalyzes the last reaction in the mRNA cap formation pathway. This is mRNA-capping enzyme small subunit from Fowlpox virus (strain NVSL) (FPV).